We begin with the raw amino-acid sequence, 615 residues long: ATP-dependent zinc metalloprotease FtsH (615 aa).

Residues 1–8 (MAMNKDKP) are Cytoplasmic-facing. A helical transmembrane segment spans residues 9 to 29 (WTLYLLAVGLAVLAAVQFGLF). The Periplasmic segment spans residues 30–104 (SQPAVQAIPY…FSGVVEDNTV (75 aa)). The chain crosses the membrane as a helical span at residues 105–125 (ATVMGALMPLLMLLALWYFLF). The Cytoplasmic segment spans residues 126–615 (HGLGQKQGLG…ATYVLVDATK (490 aa)). 198–205 (GPPGTGKT) contacts ATP. A Zn(2+)-binding site is contributed by H420. E421 is a catalytic residue. Zn(2+) contacts are provided by H424 and D497.

It in the central section; belongs to the AAA ATPase family. The protein in the C-terminal section; belongs to the peptidase M41 family. As to quaternary structure, homohexamer. The cofactor is Zn(2+).

The protein localises to the cell inner membrane. Acts as a processive, ATP-dependent zinc metallopeptidase for both cytoplasmic and membrane proteins. Plays a role in the quality control of integral membrane proteins. The chain is ATP-dependent zinc metalloprotease FtsH from Pseudomonas putida (strain ATCC 700007 / DSM 6899 / JCM 31910 / BCRC 17059 / LMG 24140 / F1).